Here is a 70-residue protein sequence, read N- to C-terminus: Aurein-3.1 (70 aa).

A signal peptide spans Met1–Cys22. Residues Glu23 to Arg49 constitute a propeptide that is removed on maturation. The segment at Arg27–Lys48 is disordered. Basic and acidic residues predominate over residues Ala38–Lys48. Position 66 is an isoleucine amide (Ile66).

In terms of tissue distribution, expressed by the skin dorsal glands.

Its subcellular location is the secreted. It localises to the target cell membrane. Functionally, amphipathic alpha-helical antimicrobial peptide with weak to potent activity against Gram-positive bacteria, and no activity against Gram-negative bacteria. Probably acts by disturbing membrane functions with its amphipathic structure. Shows anticancer activity. The protein is Aurein-3.1 of Ranoidea aurea (Green and golden bell frog).